The following is a 68-amino-acid chain: Neuronal regeneration-related protein (68 aa).

Residues 22 to 54 form a disordered region; it reads EGRLPKGRLPVPKEVNRKKNDETNAASLTPLGS. Over residues 44–54 the composition is skewed to polar residues; the sequence is TNAASLTPLGS. Serine 59 carries the phosphoserine modification.

As to quaternary structure, interacts with the latency-associated peptides (LAP) of TGFB1 and TGFB2; the interaction results in a decrease in TGFB autoinduction. Interacts with FLNA. Phosphorylated on Ser-59. Phosphorylation decreases stability and activity. Expressed in lung (at protein level).

Its subcellular location is the cytoplasm. May have roles in neural function. Ectopic expression augments motility of gliomas. Also promotes axonal regeneration. May also have functions in cellular differentiation. Induces differentiation of fibroblast into myofibroblast and myofibroblast ameboid migration. Increases retinoic-acid regulation of lipid-droplet biogenesis. Down-regulates the expression of TGFB1 and TGFB2 but not of TGFB3. May play a role in the regulation of alveolar generation. This chain is Neuronal regeneration-related protein (NREP), found in Homo sapiens (Human).